A 366-amino-acid chain; its full sequence is UDP-N-acetylglucosamine--N-acetylmuramyl-(pentapeptide) pyrophosphoryl-undecaprenol N-acetylglucosamine transferase (366 aa).

UDP-N-acetyl-alpha-D-glucosamine-binding positions include 14–16 (TGG), asparagine 125, arginine 168, serine 196, and glutamine 297.

This sequence belongs to the glycosyltransferase 28 family. MurG subfamily.

It is found in the cell inner membrane. It carries out the reaction di-trans,octa-cis-undecaprenyl diphospho-N-acetyl-alpha-D-muramoyl-L-alanyl-D-glutamyl-meso-2,6-diaminopimeloyl-D-alanyl-D-alanine + UDP-N-acetyl-alpha-D-glucosamine = di-trans,octa-cis-undecaprenyl diphospho-[N-acetyl-alpha-D-glucosaminyl-(1-&gt;4)]-N-acetyl-alpha-D-muramoyl-L-alanyl-D-glutamyl-meso-2,6-diaminopimeloyl-D-alanyl-D-alanine + UDP + H(+). It functions in the pathway cell wall biogenesis; peptidoglycan biosynthesis. Cell wall formation. Catalyzes the transfer of a GlcNAc subunit on undecaprenyl-pyrophosphoryl-MurNAc-pentapeptide (lipid intermediate I) to form undecaprenyl-pyrophosphoryl-MurNAc-(pentapeptide)GlcNAc (lipid intermediate II). The chain is UDP-N-acetylglucosamine--N-acetylmuramyl-(pentapeptide) pyrophosphoryl-undecaprenol N-acetylglucosamine transferase from Rhodopseudomonas palustris (strain HaA2).